Here is a 1166-residue protein sequence, read N- to C-terminus: Reverse gyrase (1166 aa).

The RG N-terminal-type zinc-finger motif lies at M1–G40. Residues C10, C13, C28, and C31 each coordinate Zn(2+). Residues Q92 and A109–T116 each bind ATP. The region spanning L96–P285 is the Helicase ATP-binding domain. Positions D190–D193 match the DEAD box motif. The topoisomerase I stretch occupies residues F576–V1166. The Toprim domain occupies T580–I743. Residue E586 participates in Mg(2+) binding. The RG C-terminal-type zinc-finger motif lies at I662 to T689. 4 residues coordinate Zn(2+): C665, C668, C679, and C682. Position 712 (D712) interacts with Mg(2+). Residues N759–V1157 form the Topo IA-type catalytic domain. Catalysis depends on Y903, which acts as the O-(5'-phospho-DNA)-tyrosine intermediate.

The protein in the N-terminal section; belongs to the DEAD box helicase family. DDVD subfamily. In the C-terminal section; belongs to the type IA topoisomerase family. In terms of assembly, monomer. Requires Zn(2+) as cofactor. Mg(2+) serves as cofactor.

The protein resides in the cytoplasm. It catalyses the reaction ATP + H2O = ADP + phosphate + H(+). With respect to regulation, inhibited by UV light-induced lesions; substrate is completely cleaved but a nicked form accumulates, suggesting the reaction is blocked between the cleavage and ligation steps. Inhibited by actinomycin D; substrate DNA remains negatively supercoiled in this case. Activity is stimulated by SSB from S.solfataricus strain P2. Positive supercoiling is inhibited by Sul7d (also called Sso7d) from S.solfataricus strain MT4; SSB from S.solfataricus strain P2 relieves this inhibition. In terms of biological role, modifies the topological state of DNA by introducing positive supercoils in an ATP-dependent process. Increases the linking number in steps of +1. In vitro requires high concentrations to supercoil negatively supercoiled DNA, relaxes plasmid DNA first; DNA single-strand binding protein (SSB) from S.solfataricus strain P2 stimulates positive supercoiling. SSB stimulates DNA-binding by reverse gyrase, and thus all subsequent steps. Binds to single-stranded DNA, transiently cleaves and then rejoins the ends, introducing a positive supercoil in the process. The scissile phosphodiester is attacked by the catalytic tyrosine of the enzyme, resulting in the formation of a DNA-(5'-phosphotyrosyl)-enzyme intermediate. May be involved in DNA damage response. Probably involved in rewinding DNA strands in regions of the chromosome that have opened up to allow replication, transcription, DNA repair and/or for DNA protection. The protein is Reverse gyrase of Saccharolobus shibatae (strain ATCC 51178 / DSM 5389 / JCM 8931 / NBRC 15437 / B12) (Sulfolobus shibatae).